The sequence spans 406 residues: Tubby-like F-box protein 11 (406 aa).

In terms of domain architecture, F-box spans S53 to G108.

The protein belongs to the TUB family. As to expression, ubiquitous.

The chain is Tubby-like F-box protein 11 (TULP11) from Oryza sativa subsp. japonica (Rice).